A 219-amino-acid polypeptide reads, in one-letter code: Cytidylate kinase (219 aa).

Residue 21 to 29 (GPAASGKGT) coordinates ATP.

It belongs to the cytidylate kinase family. Type 1 subfamily.

The protein localises to the cytoplasm. It catalyses the reaction CMP + ATP = CDP + ADP. The catalysed reaction is dCMP + ATP = dCDP + ADP. This chain is Cytidylate kinase, found in Rickettsia prowazekii (strain Madrid E).